The primary structure comprises 484 residues: MAELRPSVAPGPAAPPASGPSAPPAFASLFPPGLHAIYGECRRLYPDQPNPLQVTAIVKYWLGGPDPLDYVSMYRNMGSPSANIPEHWHYISFGLSDLYGDNRVHEFTGTDGPSGFGFELTFRLKRETGESAPPTWPAELMQGLARYVFQSENTFCSGDHVSWHSPLDNSESRIQHMLLTEDPQMQPVRTPFGVVTFLQIVGVCTEELHSAQQWNGQGILELLRTVPIAGGPWLITDMRRGETIFEIDPHLQERVDKGIETDGSNLSGVSAKCAWDDLSRPPEDEEDSRSICLGTQPRRLSGKDTEQIRETLRRGLEINSKPVLPPINSQRQNGLTHDRAPSRKDSLGSDSSTAIIPHELIRTRQLESVHLKFNQESGALIPLCLRGRLLHGRHFTYKSITGDMAITFVSTGVEGAFATEEHPYAAHGPWLQILLTEEFVEKMLEDLEDLTSPEEFKLPKEYSWPEKKLKVSILPDVVFDSPLH.

The segment at 1 to 21 is disordered; sequence MAELRPSVAPGPAAPPASGPS. Over residues 12–21 the composition is skewed to pro residues; that stretch reads PAAPPASGPS. Residue K257 forms a Glycyl lysine isopeptide (Lys-Gly) (interchain with G-Cter in ubiquitin) linkage. Residues 279–360 are disordered; it reads SRPPEDEEDS…SSTAIIPHEL (82 aa). S301 is modified (phosphoserine). At K303 the chain carries N6-acetyllysine. K321 is covalently cross-linked (Glycyl lysine isopeptide (Lys-Gly) (interchain with G-Cter in SUMO2)). Residues 336-347 show a composition bias toward basic and acidic residues; the sequence is THDRAPSRKDSL. Residues S342, S346, and S352 each carry the phosphoserine modification. Phosphothreonine is present on T353. S481 is subject to Phosphoserine.

Belongs to the SUFU family. As to quaternary structure, may form homodimers. Interacts with ULK3; inactivating the protein kinase activity of ULK3. Interacts with RAB23. Part of a DNA-bound corepressor complex containing SAP18, GLI1 and SIN3. Part of a complex containing CTNNB1. Binds BTRC, GLI2, GLI3, SAP18 and STK36. Binds both free and DNA-bound GLI1. Interacts with KIF7. Interacts with GLI3FL and this interaction regulates the formation of either repressor or activator forms of GLI3. Its association with GLI3FL is regulated by Hh signaling and dissociation of the SUFU-GLI3 interaction requires the presence of the ciliary motor KIF3A. In terms of processing, polyubiquitinated at Lys-257 by the SCF(FBXL17) complex, leading to its subsequent degradation and allowing the release of GLI1 for proper hedgehog/smoothened signal transduction. Ubiquitination is impaired by phosphorylation at Ser-342, Ser-346, Ser-352 and Thr-353. Phosphorylation at Ser-342, Ser-346, Ser-352 and Thr-353 prevents ubiquitination by the SCF(FBXL17) complex. As to expression, widely expressed in adult and fetal tissues.

It is found in the cytoplasm. The protein localises to the nucleus. Its function is as follows. Negative regulator in the hedgehog/smoothened signaling pathway. Down-regulates GLI1-mediated transactivation of target genes. Part of a corepressor complex that acts on DNA-bound GLI1. May also act by linking GLI1 to BTRC and thereby targeting GLI1 to degradation by the proteasome. Sequesters GLI1, GLI2 and GLI3 in the cytoplasm, this effect is overcome by binding of STK36 to both SUFU and a GLI protein. Negative regulator of beta-catenin signaling. Regulates the formation of either the repressor form (GLI3R) or the activator form (GLI3A) of the full-length form of GLI3 (GLI3FL). GLI3FL is complexed with SUFU in the cytoplasm and is maintained in a neutral state. Without the Hh signal, the SUFU-GLI3 complex is recruited to cilia, leading to the efficient processing of GLI3FL into GLI3R. When Hh signaling is initiated, SUFU dissociates from GLI3FL and the latter translocates to the nucleus, where it is phosphorylated, destabilized, and converted to a transcriptional activator (GLI3A). Required for normal embryonic development. Required for the proper formation of hair follicles and the control of epidermal differentiation. This Mus musculus (Mouse) protein is Suppressor of fused homolog.